We begin with the raw amino-acid sequence, 2223 residues long: Protein Ycf2 (2223 aa).

Gly1576–Ser1583 is an ATP binding site.

The protein belongs to the Ycf2 family.

It is found in the plastid. It localises to the chloroplast stroma. Its function is as follows. Probable ATPase of unknown function. Its presence in a non-photosynthetic plant (Epifagus virginiana) and experiments in tobacco indicate that it has an essential function which is probably not related to photosynthesis. The chain is Protein Ycf2 from Silene latifolia (White campion).